The primary structure comprises 396 residues: NDP-glycosyltransferase YjiC (396 aa).

Residues Asn-18, Thr-234, Val-283, His-298, and 302–306 (NSTME) each bind UDP.

It belongs to the UDP-glycosyltransferase family.

The catalysed reaction is an NDP-glycose + an acceptor = a glycosylated acceptor + NDP.. In terms of biological role, glycosyltransferase that can glycosylate a wide range of substrates, including various flavonoids (flavones, flavonols, flavanones, flavanols, chalcones), isoflavonoids and stilbenes, to produce multiple glycosylated products. It can accept diverse nucleotide diphosphate-D/L-sugars as donors, including ADP-, GDP-, CDP-, TDP- or UDP-alpha-D-glucose, and catalyzes O-, N-, or S-glycosylation. In vitro, catalyzes the glycosylation of, among others, apigenin, 3-hydroxyflavone, phloretin or resveratrol, resulting in multiple glucosylated products, along with mono-, di-, tri- and tetraglucosides. Can also catalyze the glycosylation of the macrolide epothilone A with diverse NDP-D/L-sugars, forming different epothilone A glycoside derivatives. The chain is NDP-glycosyltransferase YjiC from Bacillus licheniformis (strain ATCC 14580 / DSM 13 / JCM 2505 / CCUG 7422 / NBRC 12200 / NCIMB 9375 / NCTC 10341 / NRRL NRS-1264 / Gibson 46).